A 419-amino-acid polypeptide reads, in one-letter code: Gamma-glutamyl phosphate reductase (419 aa).

Belongs to the gamma-glutamyl phosphate reductase family.

Its subcellular location is the cytoplasm. The catalysed reaction is L-glutamate 5-semialdehyde + phosphate + NADP(+) = L-glutamyl 5-phosphate + NADPH + H(+). The protein operates within amino-acid biosynthesis; L-proline biosynthesis; L-glutamate 5-semialdehyde from L-glutamate: step 2/2. In terms of biological role, catalyzes the NADPH-dependent reduction of L-glutamate 5-phosphate into L-glutamate 5-semialdehyde and phosphate. The product spontaneously undergoes cyclization to form 1-pyrroline-5-carboxylate. The polypeptide is Gamma-glutamyl phosphate reductase (Yersinia pestis).